The sequence spans 177 residues: Protein SPMIP1 (177 aa).

A disordered region spans residues Ser-47–Ala-80.

The protein is Protein SPMIP1 (Spmip1) of Mus musculus (Mouse).